Here is a 212-residue protein sequence, read N- to C-terminus: Cytochrome c biogenesis ATP-binding export protein CcmA (212 aa).

The ABC transporter domain occupies 8–212; the sequence is LQATALACER…RSIDLAKGSA (205 aa). Residue 40–47 coordinates ATP; it reads GPNGSGKT.

This sequence belongs to the ABC transporter superfamily. CcmA exporter (TC 3.A.1.107) family. In terms of assembly, the complex is composed of two ATP-binding proteins (CcmA) and two transmembrane proteins (CcmB).

The protein localises to the cell inner membrane. The enzyme catalyses heme b(in) + ATP + H2O = heme b(out) + ADP + phosphate + H(+). Functionally, part of the ABC transporter complex CcmAB involved in the biogenesis of c-type cytochromes; once thought to export heme, this seems not to be the case, but its exact role is uncertain. Responsible for energy coupling to the transport system. In Pseudomonas syringae pv. tomato (strain ATCC BAA-871 / DC3000), this protein is Cytochrome c biogenesis ATP-binding export protein CcmA.